The following is an 80-amino-acid chain: uncharacterized protein (80 aa).

4Fe-4S ferredoxin-type domains lie at 21–49 (KIIEIDYNKCKNCLSCYRVCKNNVFAIKN) and 50–80 (NRVVVKNENNCTKCGECLKVCRYGAIILYDA). Residues Cys-30, Cys-33, Cys-36, Cys-40, Cys-60, Cys-63, Cys-66, and Cys-70 each contribute to the [4Fe-4S] cluster site.

Requires [4Fe-4S] cluster as cofactor.

This is an uncharacterized protein from Methanocaldococcus jannaschii (strain ATCC 43067 / DSM 2661 / JAL-1 / JCM 10045 / NBRC 100440) (Methanococcus jannaschii).